We begin with the raw amino-acid sequence, 619 residues long: Mitogen-activated protein kinase kinase kinase 2 (619 aa).

Disordered regions lie at residues 25 to 44 (LSLQETRKAKPSSPKKQNDV), 126 to 168 (QATN…PPPG), 201 to 245 (LDPL…DNHQ), and 289 to 355 (RTQG…APTN). Phosphoserine is present on Ser-26. One can recognise a PB1 domain in the interval 43 to 122 (DVRVKFEHRG…KSLKILLVVN (80 aa)). Residues 126–143 (QATNLEPSPSPEDLNNTP) show a composition bias toward polar residues. 2 positions are modified to phosphoserine: Ser-153 and Ser-164. A compositionally biased stretch (low complexity) spans 203-219 (PLSLSSPENSGSGSCPS). Ser-239, Ser-297, Ser-311, Ser-331, Ser-344, and Ser-349 each carry phosphoserine. Over residues 290–299 (TQGTSFRSPV) the composition is skewed to polar residues. Residues 300-315 (SFSPTDHSLSTSSGSS) show a composition bias toward low complexity. The segment covering 322–332 (DDSRIRRRGSD) has biased composition (basic and acidic residues). Polar residues predominate over residues 336–346 (PTLTVTDISPP). The Protein kinase domain maps to 356 to 616 (WRLGKLLGQG…AEELLRHMFV (261 aa)). ATP is bound by residues 362–370 (LGQGAFGRV) and Lys-385. The active-site Proton acceptor is the Asp-483.

The protein belongs to the protein kinase superfamily. STE Ser/Thr protein kinase family. MAP kinase kinase kinase subfamily. In terms of assembly, self-associates. Binds both upstream activators and downstream substrates in multimolecular complexes. Interacts (via the kinase catalytic domain) with STK38. Interacts with XIAP/BIRC4. The cofactor is Mg(2+). Post-translationally, ubiquitination by XIAP/BIRC4 does not lead to proteasomal degradation. In terms of processing, autophosphorylated.

The protein resides in the cytoplasm. It is found in the nucleus. The catalysed reaction is L-seryl-[protein] + ATP = O-phospho-L-seryl-[protein] + ADP + H(+). The enzyme catalyses L-threonyl-[protein] + ATP = O-phospho-L-threonyl-[protein] + ADP + H(+). Activated by phosphorylation on Thr-524. Interacts with PKN2; the interaction activates PKN2 kinase activity in a MAP3K2-independent kinase activity. Component of a protein kinase signal transduction cascade. Regulates the JNK and ERK5 pathways by phosphorylating and activating MAP2K5 and MAP2K7. Plays a role in caveolae kiss-and-run dynamics. This Mus musculus (Mouse) protein is Mitogen-activated protein kinase kinase kinase 2 (Map3k2).